The chain runs to 239 residues: Large ribosomal subunit protein uL1 (239 aa).

It belongs to the universal ribosomal protein uL1 family. Part of the 50S ribosomal subunit.

Its function is as follows. Binds directly to 23S rRNA. The L1 stalk is quite mobile in the ribosome, and is involved in E site tRNA release. In terms of biological role, protein L1 is also a translational repressor protein, it controls the translation of the L11 operon by binding to its mRNA. The sequence is that of Large ribosomal subunit protein uL1 from Mycolicibacterium gilvum (strain PYR-GCK) (Mycobacterium gilvum (strain PYR-GCK)).